The chain runs to 176 residues: Small ribosomal subunit protein uS4 (176 aa).

Residues 103-165 (RRLQTIVYKK…PTSPYAKRRL (63 aa)) form the S4 RNA-binding domain.

This sequence belongs to the universal ribosomal protein uS4 family. In terms of assembly, part of the 30S ribosomal subunit. Contacts protein S5. The interaction surface between S4 and S5 is involved in control of translational fidelity.

Functionally, one of the primary rRNA binding proteins, it binds directly to 16S rRNA where it nucleates assembly of the body of the 30S subunit. With S5 and S12 plays an important role in translational accuracy. This is Small ribosomal subunit protein uS4 from Hyperthermus butylicus (strain DSM 5456 / JCM 9403 / PLM1-5).